Here is a 527-residue protein sequence, read N- to C-terminus: Peptide chain release factor 3 (527 aa).

Residues D9–Q278 enclose the tr-type G domain. GTP contacts are provided by residues S18–T25, D86–H90, and N140–D143.

This sequence belongs to the TRAFAC class translation factor GTPase superfamily. Classic translation factor GTPase family. PrfC subfamily.

The protein resides in the cytoplasm. Its function is as follows. Increases the formation of ribosomal termination complexes and stimulates activities of RF-1 and RF-2. It binds guanine nucleotides and has strong preference for UGA stop codons. It may interact directly with the ribosome. The stimulation of RF-1 and RF-2 is significantly reduced by GTP and GDP, but not by GMP. This chain is Peptide chain release factor 3, found in Shewanella denitrificans (strain OS217 / ATCC BAA-1090 / DSM 15013).